The primary structure comprises 163 residues: MLGLIQAAKSLLLLEFMSAFFLAMRQFFSPKPTINYPYEKGVVSQRFRGEHALRRYPNGEERCIACKLCEAICPAQAITIEAGPRRNDGTRRTVRYDIDMVKCIYCGFCQEACPVEAIVEGPNFEFATETREELYYDKEKLLMNGDRWEREIARNILMDAPYR.

2 consecutive 4Fe-4S ferredoxin-type domains span residues 53–83 (LRRY…IEAG) and 94–123 (VRYD…EGPN). Residues Cys-63, Cys-66, Cys-69, Cys-73, Cys-103, Cys-106, Cys-109, and Cys-113 each contribute to the [4Fe-4S] cluster site.

This sequence belongs to the complex I 23 kDa subunit family. In terms of assembly, NDH-1 is composed of 14 different subunits. Subunits NuoA, H, J, K, L, M, N constitute the membrane sector of the complex. The cofactor is [4Fe-4S] cluster.

The protein resides in the cell inner membrane. The catalysed reaction is a quinone + NADH + 5 H(+)(in) = a quinol + NAD(+) + 4 H(+)(out). Functionally, NDH-1 shuttles electrons from NADH, via FMN and iron-sulfur (Fe-S) centers, to quinones in the respiratory chain. The immediate electron acceptor for the enzyme in this species is believed to be ubiquinone. Couples the redox reaction to proton translocation (for every two electrons transferred, four hydrogen ions are translocated across the cytoplasmic membrane), and thus conserves the redox energy in a proton gradient. The chain is NADH-quinone oxidoreductase subunit I from Bartonella henselae (strain ATCC 49882 / DSM 28221 / CCUG 30454 / Houston 1) (Rochalimaea henselae).